The chain runs to 817 residues: MARLERDGTNKSLESLMDSHKPGGTTTNLNQLRTQKSIPGYGLEFTNLSYSIIKKQKKDGVWINKETYLLHDISGQAIKGEIMAIMGPSGAGKSTFLDALAGRIAKGSLQGSVRIDGKPVTTSYMKMVSSYVMQDDQLFPMLTVFETFMFAAEVRLPPSISRDEKKKRVHELLNKLGLQSATHTYIGDEGRRGVSGGERRRVSIGIEIIHKPSLLFLDEPTSGLDSTSAYSVVEKIKDIAQGGSIVLMTIHQPSFRIQMLLDKITILARGRLIYMGRPDALHTHLSGFGRPVPDGENNIEYLLDVITEYDQATVGLDPLVQYQHDGHKPDPAAMTPVPKPPRTPYRRNTPASKHMISLRSQGFTAGTPQPDSSQFGLDDDDNDDDENFDNSLERRSVQTSRNIVTSGVYPRLASQFYQDFSAKDFSVWLYNGVVGTPRRPPSWTPARTPGWTPGKTPLSGPRSFVSNQHSASYQDPYYIQKTNTVVGQSMDYSATSYAPSYEEFEIEEVLDEPDLGPKYANPWLREVAVLSWRTVLNVIRTPELFASREIVLTVMALVLSTIFKNLGDTTFIDINRLLNFYIFAVCLVFFSSNDAVPSFIMERFIFIRETSHNAYRASSYVISSLIVYLPFFAVQGLTFAVITKLMLHLKSNLFNFWMILFASLITTNAYVMLVSALVPSYITGYAVVIATTALFFLTCGFFLKRTQIPAYWKWLHYISAIKYPFEGLLINEFKNNRGCYSGNKADLSPGPLGDVKPSKHHNASLPLNCLLGEDVLSTMDITMESLWYDILILLAWGVLYRFFFYLVLRFYSKNERK.

The interval 1 to 30 (MARLERDGTNKSLESLMDSHKPGGTTTNLN) is disordered. Topologically, residues 1-542 (MARLERDGTN…RTVLNVIRTP (542 aa)) are cytoplasmic. Positions 43 to 294 (LEFTNLSYSI…LSGFGRPVPD (252 aa)) constitute an ABC transporter domain. 87–94 (GPSGAGKS) is a binding site for ATP. Disordered stretches follow at residues 321 to 349 (QYQH…RRNT), 362 to 395 (GFTA…LERR), and 439 to 463 (RPPS…GPRS). Positions 362-375 (GFTAGTPQPDSSQF) are enriched in polar residues. Over residues 377–388 (LDDDDNDDDENF) the composition is skewed to acidic residues. A helical membrane pass occupies residues 543-563 (ELFASREIVLTVMALVLSTIF). The Extracellular segment spans residues 564–579 (KNLGDTTFIDINRLLN). The helical transmembrane segment at 580–600 (FYIFAVCLVFFSSNDAVPSFI) threads the bilayer. Topologically, residues 601-621 (MERFIFIRETSHNAYRASSYV) are cytoplasmic. The helical transmembrane segment at 622 to 642 (ISSLIVYLPFFAVQGLTFAVI) threads the bilayer. At 643-657 (TKLMLHLKSNLFNFW) the chain is on the extracellular side. A helical membrane pass occupies residues 658-678 (MILFASLITTNAYVMLVSALV). Residues 679-681 (PSY) lie on the Cytoplasmic side of the membrane. The helical transmembrane segment at 682–702 (ITGYAVVIATTALFFLTCGFF) threads the bilayer. The Extracellular segment spans residues 703–787 (LKRTQIPAYW…TMDITMESLW (85 aa)). Residue asparagine 762 is glycosylated (N-linked (GlcNAc...) asparagine). Residues 788–808 (YDILILLAWGVLYRFFFYLVL) form a helical membrane-spanning segment. Residues 809–817 (RFYSKNERK) are Cytoplasmic-facing.

This sequence belongs to the ABC transporter superfamily. ABCG family. Stunted arbuscule (STR) subfamily. In terms of assembly, heterodimerizes with STR2; the resulting transporter is located in the peri-arbuscular membrane. In terms of tissue distribution, expressed constitutively in the vascular tissue of roots.

It is found in the cell membrane. Its function is as follows. Together with STR2, required for arbuscule development in arbuscular mycorrhizal (AM) symbiosis. This is ABC transporter G family member STR from Medicago truncatula (Barrel medic).